Here is a 529-residue protein sequence, read N- to C-terminus: CTP synthase (529 aa).

The tract at residues 1–267 (MKEAKFIFVT…DTQILEHFHL (267 aa)) is amidoligase domain. Ser-15 is a binding site for CTP. Ser-15 is a binding site for UTP. ATP-binding positions include 16-21 (SLGKGL) and Asp-73. Residues Asp-73 and Glu-141 each contribute to the Mg(2+) site. CTP contacts are provided by residues 148 to 150 (DIE), 188 to 193 (KTKPTQ), and Lys-224. UTP contacts are provided by residues 188-193 (KTKPTQ) and Lys-224. Positions 292 to 529 (TVSIVGKYTE…SFVKAAIDKK (238 aa)) constitute a Glutamine amidotransferase type-1 domain. L-glutamine is bound at residue Gly-354. Cys-381 serves as the catalytic Nucleophile; for glutamine hydrolysis. Residues 382–385 (LGMQ), Glu-405, and Arg-459 contribute to the L-glutamine site. Active-site residues include His-504 and Glu-506.

The protein belongs to the CTP synthase family. In terms of assembly, homotetramer.

It catalyses the reaction UTP + L-glutamine + ATP + H2O = CTP + L-glutamate + ADP + phosphate + 2 H(+). It carries out the reaction L-glutamine + H2O = L-glutamate + NH4(+). The enzyme catalyses UTP + NH4(+) + ATP = CTP + ADP + phosphate + 2 H(+). It participates in pyrimidine metabolism; CTP biosynthesis via de novo pathway; CTP from UDP: step 2/2. Its activity is regulated as follows. Allosterically activated by GTP, when glutamine is the substrate; GTP has no effect on the reaction when ammonia is the substrate. The allosteric effector GTP functions by stabilizing the protein conformation that binds the tetrahedral intermediate(s) formed during glutamine hydrolysis. Inhibited by the product CTP, via allosteric rather than competitive inhibition. In terms of biological role, catalyzes the ATP-dependent amination of UTP to CTP with either L-glutamine or ammonia as the source of nitrogen. Regulates intracellular CTP levels through interactions with the four ribonucleotide triphosphates. This is CTP synthase from Wolbachia pipientis wMel.